A 466-amino-acid polypeptide reads, in one-letter code: Argininosuccinate lyase (466 aa).

The protein belongs to the lyase 1 family. Argininosuccinate lyase subfamily.

It localises to the cytoplasm. The catalysed reaction is 2-(N(omega)-L-arginino)succinate = fumarate + L-arginine. It participates in amino-acid biosynthesis; L-arginine biosynthesis; L-arginine from L-ornithine and carbamoyl phosphate: step 3/3. The sequence is that of Argininosuccinate lyase from Brucella anthropi (strain ATCC 49188 / DSM 6882 / CCUG 24695 / JCM 21032 / LMG 3331 / NBRC 15819 / NCTC 12168 / Alc 37) (Ochrobactrum anthropi).